Consider the following 351-residue polypeptide: Probable glucuronosyltransferase Os10g0205300 (351 aa).

The Cytoplasmic segment spans residues 1–11 (MAAPPCPPRRP). Residues 12–32 (ISAPCFLLCFLLGFVAGLFPF) form a helical; Signal-anchor for type II membrane protein membrane-spanning segment. The Lumenal portion of the chain corresponds to 33–351 (AHRHLHLDLH…PLKKEARPLL (319 aa)). Residues 138–169 (SSPVPDAPQDRPRRRGRRQDRPAVDSRARQRN) are disordered. Residues 156–169 (QDRPAVDSRARQRN) show a composition bias toward basic and acidic residues. Asn259 is a glycosylation site (N-linked (GlcNAc...) asparagine).

It belongs to the glycosyltransferase 43 family.

The protein resides in the golgi apparatus membrane. Involved in the synthesis of glucuronoxylan hemicellulose in secondary cell walls. This is Probable glucuronosyltransferase Os10g0205300 from Oryza sativa subsp. japonica (Rice).